The chain runs to 362 residues: Molybdopterin synthase catalytic subunit (362 aa).

Residues 101–102, Lys117, and 124–126 contribute to the substrate site; these read HR and KKE.

The protein belongs to the MoaE family. MOCS2B subfamily. Heterotetramer; composed of 2 small (Mocs2A) and 2 large (Mocs2B) subunits.

The protein localises to the cytoplasm. It catalyses the reaction 2 [molybdopterin-synthase sulfur-carrier protein]-C-terminal-Gly-aminoethanethioate + cyclic pyranopterin phosphate + H2O = molybdopterin + 2 [molybdopterin-synthase sulfur-carrier protein]-C-terminal Gly-Gly + 2 H(+). It participates in cofactor biosynthesis; molybdopterin biosynthesis. Its function is as follows. Catalytic subunit of the molybdopterin synthase complex, a complex that catalyzes the conversion of precursor Z into molybdopterin. Acts by mediating the incorporation of 2 sulfur atoms from thiocarboxylated Mocs2A into precursor Z to generate a dithiolene group. The chain is Molybdopterin synthase catalytic subunit from Drosophila grimshawi (Hawaiian fruit fly).